The sequence spans 683 residues: Methionine--tRNA ligase (683 aa).

The 'HIGH' region signature appears at P23–H33. Residues C154, C157, C166, and C170 each coordinate Zn(2+). The short motif at K335–S339 is the 'KMSKS' region element. K338 lines the ATP pocket. Positions D583–R683 constitute a tRNA-binding domain.

Belongs to the class-I aminoacyl-tRNA synthetase family. MetG type 1 subfamily. As to quaternary structure, homodimer. Zn(2+) serves as cofactor.

It localises to the cytoplasm. It catalyses the reaction tRNA(Met) + L-methionine + ATP = L-methionyl-tRNA(Met) + AMP + diphosphate. Is required not only for elongation of protein synthesis but also for the initiation of all mRNA translation through initiator tRNA(fMet) aminoacylation. This chain is Methionine--tRNA ligase, found in Methanocella arvoryzae (strain DSM 22066 / NBRC 105507 / MRE50).